Here is a 185-residue protein sequence, read N- to C-terminus: NADH-ubiquinone oxidoreductase chain 6 (185 aa).

The next 5 membrane-spanning stretches (helical) occupy residues 3–23, 28–48, 54–74, 87–107, and 134–154; these read SLFM…ISTP, SVFW…SLGL, IFII…IMLI, HFLP…TNSP, and ELVL…ILLA.

Belongs to the complex I subunit 6 family.

Its subcellular location is the mitochondrion membrane. The enzyme catalyses a ubiquinone + NADH + 5 H(+)(in) = a ubiquinol + NAD(+) + 4 H(+)(out). Functionally, core subunit of the mitochondrial membrane respiratory chain NADH dehydrogenase (Complex I) that is believed to belong to the minimal assembly required for catalysis. Complex I functions in the transfer of electrons from NADH to the respiratory chain. The immediate electron acceptor for the enzyme is believed to be ubiquinone. This chain is NADH-ubiquinone oxidoreductase chain 6 (ND6), found in Sarcophyton glaucum (Toadstool umbrella leather coral).